Reading from the N-terminus, the 686-residue chain is Tripartite terminase subunit 3 (686 aa).

The Walker A motif motif lies at 220 to 227; it reads IPRRHGKT. Positions 315-320 match the Walker B motif motif; it reads LLFVDE. Residue Glu-320 is the For ATPase activity of the active site. Catalysis depends on for nuclease activity residues Asp-474, Glu-546, and Asp-658.

This sequence belongs to the herpesviridae TRM3 protein family. In terms of assembly, interacts with the terminase subunits TRM1 and TRM2. Interacts with portal protein.

It localises to the host nucleus. Component of the molecular motor that translocates viral genomic DNA in empty capsid during DNA packaging. Forms a tripartite terminase complex together with TRM1 and TRM2 in the host cytoplasm. Once the complex reaches the host nucleus, it interacts with the capsid portal vertex. This portal forms a ring in which genomic DNA is translocated into the capsid. TRM3 carries an RNase H-like nuclease activity that plays an important role for the cleavage of concatemeric viral DNA into unit length genomes. The chain is Tripartite terminase subunit 3 from Alcelaphine herpesvirus 1 (strain C500) (AlHV-1).